A 314-amino-acid chain; its full sequence is MPDSLRIVFAGTPEFAAEHLKALLASQHEVIAVYTQPDRPAGRGQKLMPSPVKQLAVEHGIPVHQPASLRNEEAQAELAALKPDLMVVVAYGLILPQVVLDTPRLGCINSHASLLPRWRGAAPIQRAVQAGDLESGVTVMQMEAGLDTGPMLLKVSTPISAEDTGGSLHDRLARLGPQAVLQAIDGLAAGTLIGELQDDAQANYAHKLNKDEARLDFSRPAVELERLIRAFHPWPICHTTLNGDALKVHAAELGEGSGAPGTILAADKNGLTVACGEGALRLTRLQLPGGKPLAFSDLYNSRREQFAPGLVLGQ.

113-116 contacts (6S)-5,6,7,8-tetrahydrofolate; it reads SLLP.

Belongs to the Fmt family.

The catalysed reaction is L-methionyl-tRNA(fMet) + (6R)-10-formyltetrahydrofolate = N-formyl-L-methionyl-tRNA(fMet) + (6S)-5,6,7,8-tetrahydrofolate + H(+). Attaches a formyl group to the free amino group of methionyl-tRNA(fMet). The formyl group appears to play a dual role in the initiator identity of N-formylmethionyl-tRNA by promoting its recognition by IF2 and preventing the misappropriation of this tRNA by the elongation apparatus. The protein is Methionyl-tRNA formyltransferase of Ectopseudomonas mendocina (strain ymp) (Pseudomonas mendocina).